A 310-amino-acid chain; its full sequence is Methionyl-tRNA formyltransferase (310 aa).

(6S)-5,6,7,8-tetrahydrofolate is bound at residue 110-113; sequence SLLP.

Belongs to the Fmt family.

It carries out the reaction L-methionyl-tRNA(fMet) + (6R)-10-formyltetrahydrofolate = N-formyl-L-methionyl-tRNA(fMet) + (6S)-5,6,7,8-tetrahydrofolate + H(+). Attaches a formyl group to the free amino group of methionyl-tRNA(fMet). The formyl group appears to play a dual role in the initiator identity of N-formylmethionyl-tRNA by promoting its recognition by IF2 and preventing the misappropriation of this tRNA by the elongation apparatus. The chain is Methionyl-tRNA formyltransferase from Streptomyces avermitilis (strain ATCC 31267 / DSM 46492 / JCM 5070 / NBRC 14893 / NCIMB 12804 / NRRL 8165 / MA-4680).